Consider the following 552-residue polypeptide: Protein FAM234A (552 aa).

The interval 1-40 (MMDDKDLEAEIHPLKNEDKKSQENLGNLPKTEDNLKNKPV) is disordered. Residues 1 to 49 (MMDDKDLEAEIHPLKNEDKKSQENLGNLPKTEDNLKNKPVPSRLSRCRT) are Cytoplasmic-facing. Residues 8–22 (EAEIHPLKNEDKKSQ) are compositionally biased toward basic and acidic residues. Ser21 is modified (phosphoserine). Residues 50–70 (VAFFLSLFICLFVVFVLSFII) traverse the membrane as a helical; Signal-anchor for type II membrane protein segment. Topologically, residues 71–552 (PCPDRPSSED…FSRLRYRSEV (482 aa)) are extracellular. 4 N-linked (GlcNAc...) asparagine glycosylation sites follow: Asn116, Asn119, Asn314, and Asn473.

It belongs to the FAM234 family.

Its subcellular location is the membrane. This is Protein FAM234A (Fam234a) from Rattus norvegicus (Rat).